The chain runs to 208 residues: Small ribosomal subunit protein uS4 (208 aa).

An S4 RNA-binding domain is found at 98–159; that stretch reads RRLDNVVYRL…KSRNVAAISE (62 aa).

Belongs to the universal ribosomal protein uS4 family. Part of the 30S ribosomal subunit. Contacts protein S5. The interaction surface between S4 and S5 is involved in control of translational fidelity.

Its function is as follows. One of the primary rRNA binding proteins, it binds directly to 16S rRNA where it nucleates assembly of the body of the 30S subunit. With S5 and S12 plays an important role in translational accuracy. In Trichlorobacter lovleyi (strain ATCC BAA-1151 / DSM 17278 / SZ) (Geobacter lovleyi), this protein is Small ribosomal subunit protein uS4.